A 690-amino-acid polypeptide reads, in one-letter code: uncharacterized protein (690 aa).

A disordered region spans residues 553–601; that stretch reads DESELLENEDKSESLENEDKSESLENEDKSESLENEDKSESLENEKKEK. Over residues 560 to 601 the composition is skewed to basic and acidic residues; the sequence is NEDKSESLENEDKSESLENEDKSESLENEDKSESLENEKKEK.

It belongs to the glycosyltransferase 2 family.

This is an uncharacterized protein from Rickettsia bellii (strain RML369-C).